We begin with the raw amino-acid sequence, 70 residues long: Pyruvate-flavodoxin oxidoreductase (70 aa).

Belongs to the pyruvate:ferredoxin/flavodoxin oxidoreductase family.

The enzyme catalyses oxidized [flavodoxin] + pyruvate + CoA + 2 H(+) = reduced [flavodoxin] + acetyl-CoA + CO2. Oxidoreductase required for the transfer of electrons from pyruvate to flavodoxin, which reduces nitrogenase. This Anabaena variabilis protein is Pyruvate-flavodoxin oxidoreductase (nifJ).